A 373-amino-acid polypeptide reads, in one-letter code: Queuine tRNA-ribosyltransferase (373 aa).

The active-site Proton acceptor is D89. Substrate-binding positions include 89–93 (DSGGF), D143, Q185, and G212. Residues 243–249 (GVGRPED) form an RNA binding region. Residue D262 is the Nucleophile of the active site. Residues 267 to 271 (TRNAR) are RNA binding; important for wobble base 34 recognition. Residues C300, C302, C305, and H331 each contribute to the Zn(2+) site.

The protein belongs to the queuine tRNA-ribosyltransferase family. Homodimer. Within each dimer, one monomer is responsible for RNA recognition and catalysis, while the other monomer binds to the replacement base PreQ1. It depends on Zn(2+) as a cofactor.

The enzyme catalyses 7-aminomethyl-7-carbaguanine + guanosine(34) in tRNA = 7-aminomethyl-7-carbaguanosine(34) in tRNA + guanine. The protein operates within tRNA modification; tRNA-queuosine biosynthesis. Catalyzes the base-exchange of a guanine (G) residue with the queuine precursor 7-aminomethyl-7-deazaguanine (PreQ1) at position 34 (anticodon wobble position) in tRNAs with GU(N) anticodons (tRNA-Asp, -Asn, -His and -Tyr). Catalysis occurs through a double-displacement mechanism. The nucleophile active site attacks the C1' of nucleotide 34 to detach the guanine base from the RNA, forming a covalent enzyme-RNA intermediate. The proton acceptor active site deprotonates the incoming PreQ1, allowing a nucleophilic attack on the C1' of the ribose to form the product. After dissociation, two additional enzymatic reactions on the tRNA convert PreQ1 to queuine (Q), resulting in the hypermodified nucleoside queuosine (7-(((4,5-cis-dihydroxy-2-cyclopenten-1-yl)amino)methyl)-7-deazaguanosine). In Marinobacter nauticus (strain ATCC 700491 / DSM 11845 / VT8) (Marinobacter aquaeolei), this protein is Queuine tRNA-ribosyltransferase.